A 666-amino-acid chain; its full sequence is MSSPFAPIITADIDWRDDLPYSLQFDDIYYSAEGGINQSLYVFVEGNNLINRWQQLPTNESNVFTIAETGFGTGMNFLLTWKLWEKFAPQNARLHYISCDKHPLKKNDLIKCLQKWPELSVQAEKLIEHYPVLTPGYHHLAFSNNQITLTLMLGDVLECYEQLLFCGDINLEQQLRESYVNAWYLDGFSPSKNQSMWSDNLLTVIAMLSKEGTTVATYSASSIVKTALTNAGFVIEKRKGFGPKRHMLCAYYEKAYSSSKKNRHTPWHINYPVTKDERTALIVGGGLAGCFIANSLAKRGWEVTILEEKEKVGCGGSANQQAVLFPKLSTYKSPFTQFMLYSFLYANDVYKELLKHYDLGELKGSLLLAHNEREKANQQSLIHWLELYPELGQLVDEKQSSELSGISLPCGGLFIPSSGWINSPELCDILIDNKRISLITGNRVQSINYNQKNWVVNDIEASVLILANGQQVNYFHETNHLPVKAIRGQITTIQSTQESTKLKIPLCAEGHVLPALNNSHRVGASYDIGTSEPELNALDDQLNLDRLKRIAPDIMWSQNVLDHWAGIRAASPDYLPIVGPLPNALEFKEVYSELKSNSKRWIAEAAPCYPNLYVCAAFGSRGLTTIPLATEWLAGLINKEISILPRKLIQAISPARFLRKKIIQGP.

Residues 1-253 (MSSPFAPIIT…KRHMLCAYYE (253 aa)) are tRNA (mnm(5)s(2)U34)-methyltransferase. The segment at 283–666 (VGGGLAGCFI…FLRKKIIQGP (384 aa)) is FAD-dependent cmnm(5)s(2)U34 oxidoreductase.

This sequence in the N-terminal section; belongs to the methyltransferase superfamily. tRNA (mnm(5)s(2)U34)-methyltransferase family. It in the C-terminal section; belongs to the DAO family. FAD serves as cofactor.

The protein localises to the cytoplasm. It catalyses the reaction 5-aminomethyl-2-thiouridine(34) in tRNA + S-adenosyl-L-methionine = 5-methylaminomethyl-2-thiouridine(34) in tRNA + S-adenosyl-L-homocysteine + H(+). In terms of biological role, catalyzes the last two steps in the biosynthesis of 5-methylaminomethyl-2-thiouridine (mnm(5)s(2)U) at the wobble position (U34) in tRNA. Catalyzes the FAD-dependent demodification of cmnm(5)s(2)U34 to nm(5)s(2)U34, followed by the transfer of a methyl group from S-adenosyl-L-methionine to nm(5)s(2)U34, to form mnm(5)s(2)U34. The polypeptide is tRNA 5-methylaminomethyl-2-thiouridine biosynthesis bifunctional protein MnmC (Legionella pneumophila (strain Corby)).